The following is a 623-amino-acid chain: Cell pattern formation-associated protein stuA (623 aa).

A compositionally biased stretch (polar residues) spans 13–31 (QHMQSAGQPQQPQTVTSGP). Residues 13 to 111 (QHMQSAGQPQ…DTTGQHPPPG (99 aa)) are disordered. Positions 115-221 (RVTATLWEDE…HNIGALLYHP (107 aa)) constitute an HTH APSES-type domain. Residues 149-170 (GTKLLNVAGMTRGRRDGILKSE) constitute a DNA-binding region (H-T-H motif). Disordered regions lie at residues 232-270 (AAAE…PQSS) and 332-623 (ARSM…PRQR). The segment covering 335-374 (MPTTPATTPPGSMQPYGSAQSFDGSRQQMYNAPSQQSPYP) has biased composition (polar residues). Residues 396 to 408 (GPPSSRPSGSAPS) are compositionally biased toward low complexity. Residues 423 to 446 (EHGHQSHAGEEDGEHEQHDAEYTH) are compositionally biased toward basic and acidic residues. The span at 542–553 (APPADMANPMPN) shows a compositional bias: low complexity. A nuclear localization domain region spans residues 569-594 (KRGREGDDDLSRPVGDVPGMDMKRRK). Residues 570 to 579 (RGREGDDDLS) are compositionally biased toward basic and acidic residues.

This sequence belongs to the EFG1/PHD1/stuA family.

It localises to the nucleus. Its function is as follows. Transcription factor that regulates asexual reproduction. Binds the StuA-response elements (StRE) with the consensus sequence 5'-(A/T)CGCG(T/A)N(A/C)-3' at the promoters of target genes. Controls conidiation by positively regulating the expression of brlA and abaA. Positively regulates the cephalosporin biosynthesis gene cluster. Also involved hyphal fragmentation and cell wall integrity. This Hapsidospora chrysogenum (strain ATCC 11550 / CBS 779.69 / DSM 880 / IAM 14645 / JCM 23072 / IMI 49137) (Acremonium chrysogenum) protein is Cell pattern formation-associated protein stuA.